Reading from the N-terminus, the 648-residue chain is Protein KASH5 (648 aa).

Over 1-606 (MHSILRSSLS…HSPGIRISQH (606 aa)) the chain is Cytoplasmic. A disordered region spans residues 206-228 (PEAEESANLESFGGEDPRPEGPA). A coiled-coil region spans residues 230–420 (AELLSNLEDL…EEQLSQSQEG (191 aa)). Positions 473–497 (EVEPEPEPEPEPEPEPEPQEVEFPS) are enriched in acidic residues. The disordered stretch occupies residues 473–545 (EVEPEPEPEP…EESWVLADPS (73 aa)). A helical; Anchor for type IV membrane protein membrane pass occupies residues 607 to 627 (PLVPTPVLGLLLLLLLSILLF). The Perinuclear space segment spans residues 628-648 (SQSPPPTWPHLQLYYLQPPPV).

In terms of assembly, core component the LINC complex which is composed of inner nuclear membrane SUN domain-containing proteins coupled to outer nuclear membrane KASH domain-containing nesprins. SUN and KASH domain-containing proteins seem to bind each other promiscuously; however, differentially expression of LINC complex constituents is giving rise to specific assemblies. At least SUN1/2-containing core LINC complexes are proposed to be hexameric composed of three protomers of each KASH and SUN domain-containing protein. Interacts with SUN1; this interaction mediates its telomere localization by forming a SUN1:KASH5 LINC complex. Component of a probable SUN2:KASH5 LINC complex. Self-associates. Interacts with DYNC1H1, DCTN1, DYNC1I1/2 and PAFAH1B1; suggesting the association with the dynein-dynactin motor complex. Restricted to the testis and the early ootidogenesis ovary. Expressed in spermatocytes and oocytes (at protein level).

The protein resides in the nucleus outer membrane. Its subcellular location is the nucleus. It localises to the chromosome. It is found in the telomere. The protein localises to the nucleus envelope. Functionally, as a component of the LINC (LInker of Nucleoskeleton and Cytoskeleton) complex, involved in the connection between the nuclear lamina and the cytoskeleton. The nucleocytoplasmic interactions established by the LINC complex play an important role in the transmission of mechanical forces across the nuclear envelope and in nuclear movement and positioning. Required for telomere attachment to nuclear envelope in the prophase of meiosis and for rapid telomere prophase movements implicating a SUN1/2:KASH5 LINC complex in which SUN1 and SUN2 seem to act at least partial redundantly. Required for homolog pairing during meiotic prophase in spermatocytes and probably oocytes. Essential for male and female gametogenesis. Recruits cytoplasmic dynein to telomere attachment sites at the nuclear envelope in spermatocytes. In oocytes is involved in meiotic resumption and spindle formation. The chain is Protein KASH5 from Mus musculus (Mouse).